The primary structure comprises 886 residues: Vam6/Vps39-like protein (886 aa).

Residues 15–294 (PLQIDCLAAW…RFITSGGSNI (280 aa)) form the CNH domain. One copy of the CHCR repeat lies at 573–750 (FTEDLPEVES…LLRMYLSPPS (178 aa)).

This sequence belongs to the VAM6/VPS39 family. Homooligomer. Interacts with TGFBR2 and, less efficiently, with TGFBR1; interaction with TGFBR2 is independent of the receptor kinase activity and of the presence of TGF-beta. Also interacts with ACVR2B, but not with BMPR2. Interacts with SMAD4, preferentially following TGF-beta treatment. Component of the putative homotypic fusion and vacuole protein sorting (HOPS) complex; the core of which composed of the class C Vps proteins VPS11, VPS16, VPS18 and VPS33A, is associated with VPS39 and VPS41. Interacts with PLEKHM2; involved in VPS39 recruitment to ARL8B-containing lysosomes. Associates with adapter protein complex 3 (AP-3) and clathrin:AP-3 complexes. Interacts with STX17; this interaction is increased in the absence of TMEM39A. Interacts with RAB7, RAB2A and RAB2B. Interacts with RAB2A (GTP-bound); the interaction contributes to obtaining a functional HOPS complex that promotes autophagosome-lysosome membrane fusion driven by STX17-SNAP29-VAMP8. Interacts with RAB39A (GTP-bound) and RAB39B (GTP-bound); interaction with RAB39A contributes to obtaining a functional HOPS complex.

The protein localises to the cytoplasm. It localises to the lysosome membrane. The protein resides in the late endosome membrane. Regulator of TGF-beta/activin signaling, inhibiting SMAD3- and activating SMAD2-dependent transcription. Acts by interfering with SMAD3/SMAD4 complex formation, this would lead to inhibition of SMAD3-dependent transcription and relieve SMAD3 inhibition of SMAD2-dependent promoters, thus increasing SMAD2-dependent transcription. Functionally, plays a role in vesicle-mediated protein trafficking to lysosomal compartments including the endocytic membrane transport and autophagic pathways. Acts as a component of the HOPS endosomal tethering complex which is proposed to be involved in the Rab5-to-Rab7 endosome conversion probably implicating MON1A/B, and via binding SNAREs and SNARE complexes to mediate tethering and docking events during SNARE-mediated membrane fusion. The HOPS complex is proposed to be recruited to Rab7 on the late endosomal membrane and to regulate late endocytic, phagocytic and autophagic traffic towards lysosomes. Involved in homotypic vesicle fusions between late endosomes and in heterotypic fusions between late endosomes and lysosomes. Required for fusion of endosomes and autophagosomes with lysosomes. This is Vam6/Vps39-like protein from Mus musculus (Mouse).